We begin with the raw amino-acid sequence, 201 residues long: uncharacterized protein (201 aa).

The segment at 1 to 22 (MAASKAAKSSEDRAGGGGGGGG) is disordered.

This is an uncharacterized protein from Tomato ringspot virus (isolate raspberry) (ToRSV).